The chain runs to 582 residues: Formate--tetrahydrofolate ligase (582 aa).

An ATP-binding site is contributed by 65–72 (TPLGEGKT).

The protein belongs to the formate--tetrahydrofolate ligase family.

The catalysed reaction is (6S)-5,6,7,8-tetrahydrofolate + formate + ATP = (6R)-10-formyltetrahydrofolate + ADP + phosphate. The protein operates within one-carbon metabolism; tetrahydrofolate interconversion. The sequence is that of Formate--tetrahydrofolate ligase from Vibrio vulnificus (strain CMCP6).